A 207-amino-acid chain; its full sequence is Dephospho-CoA kinase (207 aa).

Residues 1–11 are compositionally biased toward polar residues; the sequence is MTRSPAPSSPT. The interval 1–21 is disordered; it reads MTRSPAPSSPTHPRRLGLTGS. The region spanning 15–207 is the DPCK domain; the sequence is RLGLTGSIGA…DAALRQLEIT (193 aa). Position 23–28 (23–28) interacts with ATP; the sequence is GAGKST.

This sequence belongs to the CoaE family.

The protein localises to the cytoplasm. It carries out the reaction 3'-dephospho-CoA + ATP = ADP + CoA + H(+). The protein operates within cofactor biosynthesis; coenzyme A biosynthesis; CoA from (R)-pantothenate: step 5/5. Its function is as follows. Catalyzes the phosphorylation of the 3'-hydroxyl group of dephosphocoenzyme A to form coenzyme A. This Deinococcus radiodurans (strain ATCC 13939 / DSM 20539 / JCM 16871 / CCUG 27074 / LMG 4051 / NBRC 15346 / NCIMB 9279 / VKM B-1422 / R1) protein is Dephospho-CoA kinase.